A 385-amino-acid polypeptide reads, in one-letter code: Lipid-A-disaccharide synthase 2 (385 aa).

It belongs to the LpxB family.

The catalysed reaction is a lipid X + a UDP-2-N,3-O-bis[(3R)-3-hydroxyacyl]-alpha-D-glucosamine = a lipid A disaccharide + UDP + H(+). Its pathway is bacterial outer membrane biogenesis; LPS lipid A biosynthesis. In terms of biological role, condensation of UDP-2,3-diacylglucosamine and 2,3-diacylglucosamine-1-phosphate to form lipid A disaccharide, a precursor of lipid A, a phosphorylated glycolipid that anchors the lipopolysaccharide to the outer membrane of the cell. The polypeptide is Lipid-A-disaccharide synthase 2 (Legionella pneumophila subsp. pneumophila (strain Philadelphia 1 / ATCC 33152 / DSM 7513)).